We begin with the raw amino-acid sequence, 72 residues long: UPF0154 protein EF_1734 (72 aa).

Residues 4–26 (GWVVLIAVIALLVGAAGGFFLAR) form a helical membrane-spanning segment.

The protein belongs to the UPF0154 family.

Its subcellular location is the membrane. This Enterococcus faecalis (strain ATCC 700802 / V583) protein is UPF0154 protein EF_1734.